A 238-amino-acid polypeptide reads, in one-letter code: MTPHINAPEGAFADVVLMPGDPLRAKYIAETFLENAKEVTNVRNMLGYTGTYKGRPVSVMGHGMGIPSCSIYTKELITEYGVKKIIRVGSCGAVRNDVKVRDVIIGLGACTDSKVNRIRFKDNDFAAIADFDMTQAAVQAAKAKGINYRVGNLFSADLFYTPDVEMFDVMEKYGILGVEMEAAGIYGVAAEFGAKALSICTVSDHIRTGEQTSSEERQLTFNDMIEIALESVLLGDQA.

Residue His4 coordinates a purine D-ribonucleoside. Residues Gly20, Arg24, Arg43, and 87–90 (RVGS) contribute to the phosphate site. Residues 179-181 (EME) and 203-204 (SD) contribute to the a purine D-ribonucleoside site. The active-site Proton donor is Asp204.

This sequence belongs to the PNP/UDP phosphorylase family. As to quaternary structure, homohexamer; trimer of homodimers.

The enzyme catalyses a purine D-ribonucleoside + phosphate = a purine nucleobase + alpha-D-ribose 1-phosphate. It carries out the reaction a purine 2'-deoxy-D-ribonucleoside + phosphate = a purine nucleobase + 2-deoxy-alpha-D-ribose 1-phosphate. Catalyzes the reversible phosphorolytic breakdown of the N-glycosidic bond in the beta-(deoxy)ribonucleoside molecules, with the formation of the corresponding free purine bases and pentose-1-phosphate. The protein is Purine nucleoside phosphorylase DeoD-type of Mannheimia succiniciproducens (strain KCTC 0769BP / MBEL55E).